Here is a 358-residue protein sequence, read N- to C-terminus: Nicotinate-nucleotide--dimethylbenzimidazole phosphoribosyltransferase (358 aa).

Residue Glu-313 is the Proton acceptor of the active site.

It belongs to the CobT family.

It catalyses the reaction 5,6-dimethylbenzimidazole + nicotinate beta-D-ribonucleotide = alpha-ribazole 5'-phosphate + nicotinate + H(+). It participates in nucleoside biosynthesis; alpha-ribazole biosynthesis; alpha-ribazole from 5,6-dimethylbenzimidazole: step 1/2. Catalyzes the synthesis of alpha-ribazole-5'-phosphate from nicotinate mononucleotide (NAMN) and 5,6-dimethylbenzimidazole (DMB). The polypeptide is Nicotinate-nucleotide--dimethylbenzimidazole phosphoribosyltransferase (Corynebacterium glutamicum (strain R)).